Here is a 66-residue protein sequence, read N- to C-terminus: Large ribosomal subunit protein uL29 (66 aa).

Belongs to the universal ribosomal protein uL29 family.

In Syntrophobacter fumaroxidans (strain DSM 10017 / MPOB), this protein is Large ribosomal subunit protein uL29.